A 405-amino-acid chain; its full sequence is S-adenosylmethionine synthase (405 aa).

139–144 lines the ATP pocket; that stretch reads GQGSVD.

This sequence belongs to the AdoMet synthase 2 family. It depends on Mg(2+) as a cofactor.

It carries out the reaction L-methionine + ATP + H2O = S-adenosyl-L-methionine + phosphate + diphosphate. It participates in amino-acid biosynthesis; S-adenosyl-L-methionine biosynthesis; S-adenosyl-L-methionine from L-methionine: step 1/1. Its function is as follows. Catalyzes the formation of S-adenosylmethionine from methionine and ATP. This Thermococcus onnurineus (strain NA1) protein is S-adenosylmethionine synthase.